A 79-amino-acid polypeptide reads, in one-letter code: Cell division protein ZapB (79 aa).

Positions 4–78 (EVFEKLEAKV…LQALLGKMEE (75 aa)) form a coiled coil.

It belongs to the ZapB family. In terms of assembly, homodimer. The ends of the coiled-coil dimer bind to each other, forming polymers. Interacts with FtsZ.

It localises to the cytoplasm. Non-essential, abundant cell division factor that is required for proper Z-ring formation. It is recruited early to the divisome by direct interaction with FtsZ, stimulating Z-ring assembly and thereby promoting cell division earlier in the cell cycle. Its recruitment to the Z-ring requires functional FtsA or ZipA. This is Cell division protein ZapB from Cronobacter sakazakii (strain ATCC BAA-894) (Enterobacter sakazakii).